A 347-amino-acid polypeptide reads, in one-letter code: Iron-sulfur cluster assembly protein SufC (347 aa).

The ABC transporter domain occupies 100–346; that stretch reads LEIKDLHAIE…ENKGYSQFLK (247 aa). 134–141 contacts ATP; that stretch reads GRNGSGKS.

Belongs to the ABC transporter superfamily. Ycf16 family. In terms of assembly, component of a complex composed of SufB, SufC and SufD in a stoichiometric ratio of 1:2:1. Interacts with SufB. Interacts with SufD; the interaction enhances the ATPase activity of SufC. In terms of processing, proteolytically cleaved.

Its subcellular location is the plastid. The protein resides in the apicoplast. The enzyme catalyses ATP + H2O = ADP + phosphate + H(+). It functions in the pathway cofactor biosynthesis; iron-sulfur cluster biosynthesis. Functionally, participates in the sulfur mobilization (SUF) pathway for iron-sulfur (Fe-S) cluster biogenesis. As part of a complex consisting of SufB-SufC(2)-SufD, involved in assembly of [4Fe-4S] clusters. Exhibits ATPase activity. This Plasmodium falciparum (isolate 3D7) protein is Iron-sulfur cluster assembly protein SufC.